A 333-amino-acid chain; its full sequence is Flap endonuclease 1 (333 aa).

Positions Met-1–Arg-99 are N-domain. Asp-28, Asp-81, Glu-153, Glu-155, Asp-174, Asp-176, and Asp-235 together coordinate Mg(2+). The interval Glu-117–Gly-256 is I-domain. Positions Gly-325–Phe-333 are interaction with PCNA.

The protein belongs to the XPG/RAD2 endonuclease family. FEN1 subfamily. Interacts with PCNA. PCNA stimulates the nuclease activity without altering cleavage specificity. It depends on Mg(2+) as a cofactor.

Functionally, structure-specific nuclease with 5'-flap endonuclease and 5'-3' exonuclease activities involved in DNA replication and repair. During DNA replication, cleaves the 5'-overhanging flap structure that is generated by displacement synthesis when DNA polymerase encounters the 5'-end of a downstream Okazaki fragment. Binds the unpaired 3'-DNA end and kinks the DNA to facilitate 5' cleavage specificity. Cleaves one nucleotide into the double-stranded DNA from the junction in flap DNA, leaving a nick for ligation. Also involved in the base excision repair (BER) pathway. Acts as a genome stabilization factor that prevents flaps from equilibrating into structures that lead to duplications and deletions. Also possesses 5'-3' exonuclease activity on nicked or gapped double-stranded DNA. The sequence is that of Flap endonuclease 1 from Methanoregula boonei (strain DSM 21154 / JCM 14090 / 6A8).